Reading from the N-terminus, the 323-residue chain is Beta-ketoacyl-[acyl-carrier-protein] synthase III (323 aa).

Active-site residues include cysteine 112 and histidine 248. The interval 249–253 is ACP-binding; sequence QANRR. The active site involves asparagine 278.

Belongs to the thiolase-like superfamily. FabH family. In terms of assembly, homodimer.

Its subcellular location is the cytoplasm. It catalyses the reaction malonyl-[ACP] + acetyl-CoA + H(+) = 3-oxobutanoyl-[ACP] + CO2 + CoA. It participates in lipid metabolism; fatty acid biosynthesis. Its function is as follows. Catalyzes the condensation reaction of fatty acid synthesis by the addition to an acyl acceptor of two carbons from malonyl-ACP. Catalyzes the first condensation reaction which initiates fatty acid synthesis and may therefore play a role in governing the total rate of fatty acid production. Possesses both acetoacetyl-ACP synthase and acetyl transacylase activities. Its substrate specificity determines the biosynthesis of branched-chain and/or straight-chain of fatty acids. This chain is Beta-ketoacyl-[acyl-carrier-protein] synthase III, found in Streptococcus agalactiae serotype Ia (strain ATCC 27591 / A909 / CDC SS700).